The chain runs to 346 residues: MKMSFRWFGPTDPIPLEYIRQIPGMTHIVSAIYDEPVGEVWPLDKIQALKSTIEAAGLQFKVVESVPVHEDIKLGKPTRERLIANYQQTIRNLAAAGIEVICYNFMPVFDWTRTELAKKLDDGSTCLAFSTREVEQIDVSQGIALPGWDSSYAHAELQSLLAEYRGIDEGRLWEHLEHFLRAIIPVAQECGIKMAIHPDDPPRPIFGLPRIVKNRDDLARILAIVDTPANGLTLCSGSLGAGPQNNVEALVREFGGMGRIHFAHIRNVKITPEGDFEETAHLSSCGSLDIAAIVKAYHDVGFQGYYRPDHGRMIWGETGKPGYGLYDRALGAVYINGMWEAMEKTA.

This sequence belongs to the mannonate dehydratase family. The cofactor is Fe(2+). Requires Mn(2+) as cofactor.

The enzyme catalyses D-mannonate = 2-dehydro-3-deoxy-D-gluconate + H2O. Its pathway is carbohydrate metabolism; pentose and glucuronate interconversion. Functionally, catalyzes the dehydration of D-mannonate. The chain is Mannonate dehydratase from Cupriavidus taiwanensis (strain DSM 17343 / BCRC 17206 / CCUG 44338 / CIP 107171 / LMG 19424 / R1) (Ralstonia taiwanensis (strain LMG 19424)).